The primary structure comprises 402 residues: Argininosuccinate synthase (402 aa).

9–17 contributes to the ATP binding site; sequence AYSGGLDTS. Position 87 (Tyr-87) interacts with L-citrulline. Gly-117 is a binding site for ATP. Residues Thr-119, Asn-123, and Asp-124 each coordinate L-aspartate. Asn-123 is an L-citrulline binding site. The L-citrulline site is built by Arg-127, Ser-176, Ser-185, Glu-261, and Tyr-273.

The protein belongs to the argininosuccinate synthase family. Type 1 subfamily. As to quaternary structure, homotetramer.

The protein localises to the cytoplasm. It catalyses the reaction L-citrulline + L-aspartate + ATP = 2-(N(omega)-L-arginino)succinate + AMP + diphosphate + H(+). It functions in the pathway amino-acid biosynthesis; L-arginine biosynthesis; L-arginine from L-ornithine and carbamoyl phosphate: step 2/3. This is Argininosuccinate synthase from Chlorobium phaeobacteroides (strain BS1).